Here is a 471-residue protein sequence, read N- to C-terminus: MKSVYHHFAIIFFLKLFLCNCILSIPKKTLGKGLFSLGLNEFKNNVDNNSLNILGELKNSKPFINKSFIQINEKKDNVLLLKLYKQNIASDKLSTYYGKIAIGENSENIFNVLFDTGSTEFWVPFKTCKFTKNNIHNKYERTQSFKYKYDDKGLPSVLEINYLSGKLVGFDGYDTVYLGPGFAIPHTNIAFATSIDIPVLEKFKWDGIIGLGFENEDSQKRGIKPFLDHLKDEKILTEKNYKNIFGYYITNTGGYITLGGIDNRFKRSPDEKIIWSPVSTEMGFWTIDILGIRKEKQPYMNERRDDEVIVKYEGFHDGSNKSIVDTGTFLIYAPKKTIENYLNDLTINSCEDKQKLPYIIFQIKSKEIESIKGLSVIELVLSPNDYVIEYIDEVNSTKECIIGIQSDEDNINGWTLGQVFLKSYYTIFDKDNLQIGFVRNKQTINDETYLNESFLRVSKKRNKKKSYNGPL.

Residues 1 to 24 (MKSVYHHFAIIFFLKLFLCNCILS) form the signal peptide. The 343-residue stretch at 96–438 (YYGKIAIGEN…DKDNLQIGFV (343 aa)) folds into the Peptidase A1 domain. Residues D115 and D325 contribute to the active site.

It belongs to the peptidase A1 family.

Its subcellular location is the cytoplasm. The protein is Plasmepsin VII of Plasmodium berghei (strain Anka).